A 364-amino-acid polypeptide reads, in one-letter code: Histidinol-phosphate aminotransferase (364 aa).

Lys226 is subject to N6-(pyridoxal phosphate)lysine.

This sequence belongs to the class-II pyridoxal-phosphate-dependent aminotransferase family. Histidinol-phosphate aminotransferase subfamily. In terms of assembly, homodimer. Requires pyridoxal 5'-phosphate as cofactor.

The catalysed reaction is L-histidinol phosphate + 2-oxoglutarate = 3-(imidazol-4-yl)-2-oxopropyl phosphate + L-glutamate. It functions in the pathway amino-acid biosynthesis; L-histidine biosynthesis; L-histidine from 5-phospho-alpha-D-ribose 1-diphosphate: step 7/9. This is Histidinol-phosphate aminotransferase from Sulfurimonas denitrificans (strain ATCC 33889 / DSM 1251) (Thiomicrospira denitrificans (strain ATCC 33889 / DSM 1251)).